The sequence spans 180 residues: Amnesiac neuropeptides (180 aa).

Residues 1-32 form the signal peptide; sequence MRSFCCCFYPAAVALHCVLLFYTFFLLFRASA. 2 propeptides span residues 33-35 and 152-180; these read LRR and GRRS…GEMR. Residues 155–180 are disordered; it reads SVPRGQPKFSRENPRALSPSLLGEMR.

In terms of tissue distribution, enriched expression in the embryonic and larval nervous systems. Strongly expressed in two large neurons that project over all the lobes of the mushroom bodies.

It is found in the secreted. In terms of biological role, required for associative learning and memory in adults. Expression pattern suggests a modulatory role in memory formation. Controls neurotransmitter-mediated signaling pathways associated with the structure of the larval peripheral nerve. The protein is Amnesiac neuropeptides (amn) of Drosophila melanogaster (Fruit fly).